We begin with the raw amino-acid sequence, 294 residues long: uncharacterized protein (294 aa).

Residues T43 and Y104 each act as charge relay system in the active site. Residue Y130 is the Proton donor of the active site. Residue K158 is the Schiff-base intermediate with substrate of the active site.

Belongs to the DapA family. Homotetramer.

Its subcellular location is the cytoplasm. This is an uncharacterized protein from Pyrococcus abyssi (strain GE5 / Orsay).